The following is a 281-amino-acid chain: Undecaprenyl-diphosphatase (281 aa).

8 consecutive transmembrane segments (helical) span residues 5-25 (LFVL…FLPI), 48-68 (VKMY…LLYW), 92-112 (FWFM…LLDA), 118-138 (LMTP…MIYA), 154-174 (VTPK…IPGM), 192-212 (VVAA…YSLL), 226-246 (AELI…VAVI), and 261-281 (FAIY…MGFF).

It belongs to the UppP family.

The protein resides in the cell membrane. It catalyses the reaction di-trans,octa-cis-undecaprenyl diphosphate + H2O = di-trans,octa-cis-undecaprenyl phosphate + phosphate + H(+). Its function is as follows. Catalyzes the dephosphorylation of undecaprenyl diphosphate (UPP). Confers resistance to bacitracin. The sequence is that of Undecaprenyl-diphosphatase from Ruminiclostridium cellulolyticum (strain ATCC 35319 / DSM 5812 / JCM 6584 / H10) (Clostridium cellulolyticum).